Consider the following 183-residue polypeptide: Holliday junction branch migration complex subunit RuvA (183 aa).

The segment at 1-64 is domain I; the sequence is MIVAIEGIVS…EDSHKLYGFL (64 aa). Positions 65 to 138 are domain II; the sequence is DTNEQRMFEL…SDAKINIENS (74 aa). A region of interest (flexible linker) is located at residue Ser-138. Residues 138 to 183 form a domain III region; the sequence is SNQDHAQALAALLSLGFKQENILKVLRTCESQNTSELIKEALKKLA.

The protein belongs to the RuvA family. Homotetramer. Forms an RuvA(8)-RuvB(12)-Holliday junction (HJ) complex. HJ DNA is sandwiched between 2 RuvA tetramers; dsDNA enters through RuvA and exits via RuvB. An RuvB hexamer assembles on each DNA strand where it exits the tetramer. Each RuvB hexamer is contacted by two RuvA subunits (via domain III) on 2 adjacent RuvB subunits; this complex drives branch migration. In the full resolvosome a probable DNA-RuvA(4)-RuvB(12)-RuvC(2) complex forms which resolves the HJ.

The protein localises to the cytoplasm. The RuvA-RuvB-RuvC complex processes Holliday junction (HJ) DNA during genetic recombination and DNA repair, while the RuvA-RuvB complex plays an important role in the rescue of blocked DNA replication forks via replication fork reversal (RFR). RuvA specifically binds to HJ cruciform DNA, conferring on it an open structure. The RuvB hexamer acts as an ATP-dependent pump, pulling dsDNA into and through the RuvAB complex. HJ branch migration allows RuvC to scan DNA until it finds its consensus sequence, where it cleaves and resolves the cruciform DNA. The protein is Holliday junction branch migration complex subunit RuvA of Campylobacter lari (strain RM2100 / D67 / ATCC BAA-1060).